Reading from the N-terminus, the 231-residue chain is 2-C-methyl-D-erythritol 4-phosphate cytidylyltransferase (231 aa).

This sequence belongs to the IspD/TarI cytidylyltransferase family. IspD subfamily.

The catalysed reaction is 2-C-methyl-D-erythritol 4-phosphate + CTP + H(+) = 4-CDP-2-C-methyl-D-erythritol + diphosphate. It functions in the pathway isoprenoid biosynthesis; isopentenyl diphosphate biosynthesis via DXP pathway; isopentenyl diphosphate from 1-deoxy-D-xylulose 5-phosphate: step 2/6. In terms of biological role, catalyzes the formation of 4-diphosphocytidyl-2-C-methyl-D-erythritol from CTP and 2-C-methyl-D-erythritol 4-phosphate (MEP). The polypeptide is 2-C-methyl-D-erythritol 4-phosphate cytidylyltransferase (Pseudoalteromonas atlantica (strain T6c / ATCC BAA-1087)).